The primary structure comprises 140 residues: 3-hydroxyacyl-[acyl-carrier-protein] dehydratase FabZ (140 aa).

His-48 is a catalytic residue.

This sequence belongs to the thioester dehydratase family. FabZ subfamily.

It is found in the cytoplasm. It carries out the reaction a (3R)-hydroxyacyl-[ACP] = a (2E)-enoyl-[ACP] + H2O. Functionally, involved in unsaturated fatty acids biosynthesis. Catalyzes the dehydration of short chain beta-hydroxyacyl-ACPs and long chain saturated and unsaturated beta-hydroxyacyl-ACPs. This is 3-hydroxyacyl-[acyl-carrier-protein] dehydratase FabZ from Caldicellulosiruptor saccharolyticus (strain ATCC 43494 / DSM 8903 / Tp8T 6331).